The primary structure comprises 158 residues: MAEEDHTFETADAGAALTFPMQCSALRKNGHVVIKNRPCKIVDMSTSKTGKHGHAKVHLVAIDIFTGKKLEDLSPSTHNMEVPNVSRQEFQLLDIDDGYLSLMTADGDTKDDVKVPEGELGDKLQSEFDEGKDLIVTIISAMGEEAAISYKEAPKGSA.

Position 51 is a hypusine (Lys51).

The protein belongs to the eIF-5A family. Lys-51 undergoes hypusination, a unique post-translational modification that consists in the addition of a butylamino group from spermidine to lysine side chain, leading to the formation of the unusual amino acid hypusine. eIF-5As are the only known proteins to undergo this modification, which is essential for their function.

Its subcellular location is the cytoplasm. In terms of biological role, translation factor that promotes translation elongation and termination, particularly upon ribosome stalling at specific amino acid sequence contexts. Binds between the exit (E) and peptidyl (P) site of the ribosome and promotes rescue of stalled ribosome: specifically required for efficient translation of polyproline-containing peptides as well as other motifs that stall the ribosome. Acts as a ribosome quality control (RQC) cofactor by joining the RQC complex to facilitate peptidyl transfer during CAT tailing step. The protein is Eukaryotic translation initiation factor 5A (ANB1) of Candida albicans (strain SC5314 / ATCC MYA-2876) (Yeast).